The sequence spans 558 residues: Dihydroxy-acid dehydratase (558 aa).

Residue Asp-78 coordinates Mg(2+). Cys-119 contributes to the [2Fe-2S] cluster binding site. Mg(2+)-binding residues include Asp-120 and Lys-121. N6-carboxylysine is present on Lys-121. Position 192 (Cys-192) interacts with [2Fe-2S] cluster. Residue Glu-446 coordinates Mg(2+). The Proton acceptor role is filled by Ser-472.

Belongs to the IlvD/Edd family. In terms of assembly, homodimer. [2Fe-2S] cluster serves as cofactor. Requires Mg(2+) as cofactor.

The catalysed reaction is (2R)-2,3-dihydroxy-3-methylbutanoate = 3-methyl-2-oxobutanoate + H2O. The enzyme catalyses (2R,3R)-2,3-dihydroxy-3-methylpentanoate = (S)-3-methyl-2-oxopentanoate + H2O. It functions in the pathway amino-acid biosynthesis; L-isoleucine biosynthesis; L-isoleucine from 2-oxobutanoate: step 3/4. It participates in amino-acid biosynthesis; L-valine biosynthesis; L-valine from pyruvate: step 3/4. Functions in the biosynthesis of branched-chain amino acids. Catalyzes the dehydration of (2R,3R)-2,3-dihydroxy-3-methylpentanoate (2,3-dihydroxy-3-methylvalerate) into 2-oxo-3-methylpentanoate (2-oxo-3-methylvalerate) and of (2R)-2,3-dihydroxy-3-methylbutanoate (2,3-dihydroxyisovalerate) into 2-oxo-3-methylbutanoate (2-oxoisovalerate), the penultimate precursor to L-isoleucine and L-valine, respectively. The protein is Dihydroxy-acid dehydratase of Campylobacter lari (strain RM2100 / D67 / ATCC BAA-1060).